The sequence spans 317 residues: uncharacterized protein (317 aa).

Low complexity predominate over residues 68–78 (DSTNTDISNET). A disordered region spans residues 68 to 87 (DSTNTDISNETPILSNNTPI).

This is an uncharacterized protein from Methanocaldococcus jannaschii (strain ATCC 43067 / DSM 2661 / JAL-1 / JCM 10045 / NBRC 100440) (Methanococcus jannaschii).